Reading from the N-terminus, the 181-residue chain is Shikimate kinase 2 (181 aa).

Residue 12–17 (GCGKTT) coordinates ATP. Mg(2+) is bound by residues Thr16 and Asp32. Positions 34, 58, and 79 each coordinate substrate. The interval 112 to 126 (EAEPEADLRPTLTGK) is LID domain. Arg120 lines the ATP pocket. Arg139 is a binding site for substrate.

It belongs to the shikimate kinase family. AroL subfamily. In terms of assembly, monomer. Mg(2+) serves as cofactor.

It localises to the cytoplasm. It carries out the reaction shikimate + ATP = 3-phosphoshikimate + ADP + H(+). The protein operates within metabolic intermediate biosynthesis; chorismate biosynthesis; chorismate from D-erythrose 4-phosphate and phosphoenolpyruvate: step 5/7. Its function is as follows. Catalyzes the specific phosphorylation of the 3-hydroxyl group of shikimic acid using ATP as a cosubstrate. This chain is Shikimate kinase 2, found in Salmonella dublin (strain CT_02021853).